The primary structure comprises 282 residues: Pantothenate synthetase (282 aa).

30 to 37 (MGNLHDGH) serves as a coordination point for ATP. The active-site Proton donor is the His37. Residue Gln61 participates in (R)-pantoate binding. Beta-alanine is bound at residue Gln61. Residue 149-152 (GNKD) participates in ATP binding. (R)-pantoate is bound at residue Gln155. ATP is bound by residues Ala178 and 186–189 (MSSR).

The protein belongs to the pantothenate synthetase family. In terms of assembly, homodimer.

The protein localises to the cytoplasm. The enzyme catalyses (R)-pantoate + beta-alanine + ATP = (R)-pantothenate + AMP + diphosphate + H(+). It functions in the pathway cofactor biosynthesis; (R)-pantothenate biosynthesis; (R)-pantothenate from (R)-pantoate and beta-alanine: step 1/1. Its function is as follows. Catalyzes the condensation of pantoate with beta-alanine in an ATP-dependent reaction via a pantoyl-adenylate intermediate. This Marinomonas sp. (strain MWYL1) protein is Pantothenate synthetase.